Consider the following 153-residue polypeptide: Ribonuclease H (153 aa).

The RNase H type-1 domain occupies 1 to 141 (MKKIQLFTDG…CDDLARRAAE (141 aa)). 4 residues coordinate Mg(2+): Asp9, Glu47, Asp69, and Asp133.

This sequence belongs to the RNase H family. In terms of assembly, monomer. It depends on Mg(2+) as a cofactor.

The protein resides in the cytoplasm. The catalysed reaction is Endonucleolytic cleavage to 5'-phosphomonoester.. Endonuclease that specifically degrades the RNA of RNA-DNA hybrids. The chain is Ribonuclease H from Psychromonas ingrahamii (strain DSM 17664 / CCUG 51855 / 37).